A 104-amino-acid chain; its full sequence is MSKANQKIRIRLKGYDHKAVDQSAEKIVATAKKSGAEVSGPIPLPTEKQIITILRAVHKYKDAREQFEMRTHKRLIDILSPTPKTVDLLMRLDLPAGVDIEIKL.

It belongs to the universal ribosomal protein uS10 family. In terms of assembly, part of the 30S ribosomal subunit.

Involved in the binding of tRNA to the ribosomes. This Alkaliphilus metalliredigens (strain QYMF) protein is Small ribosomal subunit protein uS10.